A 217-amino-acid chain; its full sequence is MTQDEMKKAAGWAALKYVVPGTIVGVGTGSTVNHFIDALATMKDQINGAVSSSIASTERLKEFGINVYDLNDIDALSVYVDGADEINASRDMIKGGGAALTREKIVAAVADKFICIIDNTKTVDVLGQFPLPVEVIPMAREYVAREIRKLGGNPEWREGVVTDNGNIILDVKGMAIKDAKALEVQLNGIVGVVTNGLFAHRGADVVLIGTPDGVITQ.

Substrate contacts are provided by residues 28–31 (TGST), 81–84 (DGAD), and 94–97 (KGGG). Glu-103 serves as the catalytic Proton acceptor. Lys-121 provides a ligand contact to substrate.

It belongs to the ribose 5-phosphate isomerase family. Homodimer.

The enzyme catalyses aldehydo-D-ribose 5-phosphate = D-ribulose 5-phosphate. Its pathway is carbohydrate degradation; pentose phosphate pathway; D-ribose 5-phosphate from D-ribulose 5-phosphate (non-oxidative stage): step 1/1. Its function is as follows. Catalyzes the reversible conversion of ribose-5-phosphate to ribulose 5-phosphate. The sequence is that of Ribose-5-phosphate isomerase A from Aeromonas salmonicida (strain A449).